Reading from the N-terminus, the 1072-residue chain is Carbamoyl phosphate synthase large chain (1072 aa).

A carboxyphosphate synthetic domain region spans residues 1-401 (MPKRLDINTI…SLLKAVRSLE (401 aa)). Positions 129, 169, 175, 176, 208, 210, 215, 241, 242, 243, 284, and 298 each coordinate ATP. The region spanning 133–327 (RTLMQELNEP…IAKLAAKIAV (195 aa)) is the ATP-grasp 1 domain. Residues Q284, E298, and N300 each coordinate Mg(2+). Q284, E298, and N300 together coordinate Mn(2+). Positions 402–546 (LGIYHLELDH…YSTYADENEL (145 aa)) are oligomerization domain. Residues 547–929 (IVTDRKSVVV…ALYKGLVASG (383 aa)) are carbamoyl phosphate synthetic domain. The region spanning 671-861 (EAALTKLGIP…MANVATKVIL (191 aa)) is the ATP-grasp 2 domain. ATP is bound by residues R707, R746, E752, G777, V778, H779, S780, Q820, and E832. The Mg(2+) site is built by Q820, E832, and N834. Positions 820, 832, and 834 each coordinate Mn(2+). The MGS-like domain occupies 930-1072 (INIPTHGSVI…QTKRHEVVHA (143 aa)). The allosteric domain stretch occupies residues 930–1072 (INIPTHGSVI…QTKRHEVVHA (143 aa)).

It belongs to the CarB family. Composed of two chains; the small (or glutamine) chain promotes the hydrolysis of glutamine to ammonia, which is used by the large (or ammonia) chain to synthesize carbamoyl phosphate. Tetramer of heterodimers (alpha,beta)4. The cofactor is Mg(2+). It depends on Mn(2+) as a cofactor.

The catalysed reaction is hydrogencarbonate + L-glutamine + 2 ATP + H2O = carbamoyl phosphate + L-glutamate + 2 ADP + phosphate + 2 H(+). It catalyses the reaction hydrogencarbonate + NH4(+) + 2 ATP = carbamoyl phosphate + 2 ADP + phosphate + 2 H(+). It functions in the pathway amino-acid biosynthesis; L-arginine biosynthesis; carbamoyl phosphate from bicarbonate: step 1/1. The protein operates within pyrimidine metabolism; UMP biosynthesis via de novo pathway; (S)-dihydroorotate from bicarbonate: step 1/3. Its function is as follows. Large subunit of the glutamine-dependent carbamoyl phosphate synthetase (CPSase). CPSase catalyzes the formation of carbamoyl phosphate from the ammonia moiety of glutamine, carbonate, and phosphate donated by ATP, constituting the first step of 2 biosynthetic pathways, one leading to arginine and/or urea and the other to pyrimidine nucleotides. The large subunit (synthetase) binds the substrates ammonia (free or transferred from glutamine from the small subunit), hydrogencarbonate and ATP and carries out an ATP-coupled ligase reaction, activating hydrogencarbonate by forming carboxy phosphate which reacts with ammonia to form carbamoyl phosphate. The polypeptide is Carbamoyl phosphate synthase large chain (Bacillus anthracis (strain A0248)).